The sequence spans 125 residues: uncharacterized protein (125 aa).

Positions 50–73 (QTSDFSDESSRSDSSSVTNENEVS) are disordered.

This is an uncharacterized protein from Microplitis demolitor (Parasitoid wasp).